Here is a 200-residue protein sequence, read N- to C-terminus: ATP-dependent Clp protease proteolytic subunit 3 (200 aa).

Serine 101 (nucleophile) is an active-site residue. Histidine 126 is a catalytic residue.

The protein belongs to the peptidase S14 family. In terms of assembly, fourteen ClpP subunits assemble into 2 heptameric rings which stack back to back to give a disk-like structure with a central cavity, resembling the structure of eukaryotic proteasomes.

It is found in the cytoplasm. The catalysed reaction is Hydrolysis of proteins to small peptides in the presence of ATP and magnesium. alpha-casein is the usual test substrate. In the absence of ATP, only oligopeptides shorter than five residues are hydrolyzed (such as succinyl-Leu-Tyr-|-NHMec, and Leu-Tyr-Leu-|-Tyr-Trp, in which cleavage of the -Tyr-|-Leu- and -Tyr-|-Trp bonds also occurs).. In terms of biological role, cleaves peptides in various proteins in a process that requires ATP hydrolysis. Has a chymotrypsin-like activity. Plays a major role in the degradation of misfolded proteins. The chain is ATP-dependent Clp protease proteolytic subunit 3 from Parasynechococcus marenigrum (strain WH8102).